The primary structure comprises 233 residues: Ribonuclease 3 (233 aa).

An RNase III domain is found at 6–135 (QDYLAKEFNI…FIGALYLDQG (130 aa)). Residue glutamate 48 participates in Mg(2+) binding. Aspartate 52 is a catalytic residue. 2 residues coordinate Mg(2+): aspartate 121 and glutamate 124. Glutamate 124 is a catalytic residue. The 70-residue stretch at 161–230 (DAKTSLQEFL…AQQALDNMRN (70 aa)) folds into the DRBM domain. A disordered region spans residues 205 to 233 (IGEGKGSSKKHAEMQAAQQALDNMRNKNK).

It belongs to the ribonuclease III family. As to quaternary structure, homodimer. It depends on Mg(2+) as a cofactor.

The protein resides in the cytoplasm. It catalyses the reaction Endonucleolytic cleavage to 5'-phosphomonoester.. Its function is as follows. Digests double-stranded RNA. Involved in the processing of primary rRNA transcript to yield the immediate precursors to the large and small rRNAs (23S and 16S). Processes some mRNAs, and tRNAs when they are encoded in the rRNA operon. Processes pre-crRNA and tracrRNA of type II CRISPR loci if present in the organism. The polypeptide is Ribonuclease 3 (Limosilactobacillus reuteri (strain DSM 20016) (Lactobacillus reuteri)).